A 188-amino-acid polypeptide reads, in one-letter code: MDQLRQSLLDAPIIEKGDYEYFVHPISDGVPMLEPGLLREIVIKIIRKANLENVDKIVTPAAMGIHISTAVSLMTDIPLVVIRKREYGLDGEVSLHQQTGYSEGDMFINDVNEGDRVLVLDDVLSTGGTMKAVLDALDHIGADVVDTVAIIKKAGPNELDDSDHHVKTLINVTVEDGEVVIVDEHGDD.

It belongs to the purine/pyrimidine phosphoribosyltransferase family. Archaeal HPRT subfamily.

May catalyze a purine salvage reaction, the substrate is unknown. This Haloferax volcanii (strain ATCC 29605 / DSM 3757 / JCM 8879 / NBRC 14742 / NCIMB 2012 / VKM B-1768 / DS2) (Halobacterium volcanii) protein is HGPRTase-like protein 1.